Here is a 505-residue protein sequence, read N- to C-terminus: Maturase K (505 aa).

This sequence belongs to the intron maturase 2 family. MatK subfamily.

It is found in the plastid. The protein localises to the chloroplast. Usually encoded in the trnK tRNA gene intron. Probably assists in splicing its own and other chloroplast group II introns. In Kunzea capitata (Pink kunzea), this protein is Maturase K.